Consider the following 288-residue polypeptide: tRNA pseudouridine synthase B (288 aa).

Catalysis depends on aspartate 38, which acts as the Nucleophile.

This sequence belongs to the pseudouridine synthase TruB family. Type 1 subfamily.

The enzyme catalyses uridine(55) in tRNA = pseudouridine(55) in tRNA. Its function is as follows. Responsible for synthesis of pseudouridine from uracil-55 in the psi GC loop of transfer RNAs. This chain is tRNA pseudouridine synthase B, found in Carboxydothermus hydrogenoformans (strain ATCC BAA-161 / DSM 6008 / Z-2901).